Here is a 1023-residue protein sequence, read N- to C-terminus: Exportin-T (1023 aa).

It belongs to the exportin family.

It is found in the nucleus. The protein localises to the cytoplasm. In terms of biological role, tRNA nucleus export receptor which facilitates tRNA translocation across the nuclear pore complex. Involved in pre-tRNA splicing, probably by affecting the interaction of pre-tRNA with splicing endonuclease. The polypeptide is Exportin-T (los1) (Botryotinia fuckeliana (strain B05.10) (Noble rot fungus)).